The primary structure comprises 333 residues: Fructose-1,6-bisphosphatase class 1 (333 aa).

Mg(2+)-binding residues include E90, D112, L114, and D115. Substrate-binding positions include 115-118 (DGSS), N207, and K273. A Mg(2+)-binding site is contributed by E279.

Belongs to the FBPase class 1 family. As to quaternary structure, homotetramer. Mg(2+) serves as cofactor.

The protein resides in the cytoplasm. It carries out the reaction beta-D-fructose 1,6-bisphosphate + H2O = beta-D-fructose 6-phosphate + phosphate. It participates in carbohydrate biosynthesis; gluconeogenesis. In Azoarcus sp. (strain BH72), this protein is Fructose-1,6-bisphosphatase class 1.